Here is a 185-residue protein sequence, read N- to C-terminus: Ribosome-recycling factor (185 aa).

It belongs to the RRF family.

The protein resides in the cytoplasm. Functionally, responsible for the release of ribosomes from messenger RNA at the termination of protein biosynthesis. May increase the efficiency of translation by recycling ribosomes from one round of translation to another. This Geobacter sp. (strain M21) protein is Ribosome-recycling factor.